The following is a 269-amino-acid chain: Tropinone reductase homolog At2g29320 (269 aa).

Position 19–43 (19–43 (LVTGAASGIGYAIVEELAGFGAKIH)) interacts with NADP(+). Residue S152 participates in substrate binding. Y166 functions as the Proton acceptor in the catalytic mechanism.

This sequence belongs to the short-chain dehydrogenases/reductases (SDR) family. SDR65C subfamily.

This chain is Tropinone reductase homolog At2g29320, found in Arabidopsis thaliana (Mouse-ear cress).